The primary structure comprises 457 residues: Acetylcholine receptor subunit alpha (457 aa).

An N-terminal signal peptide occupies residues 1–20 (MELSTVLLLLGLCSAGLVLG). Residues 21–230 (SEHETRLVAK…ITYHFVMQRL (210 aa)) are Extracellular-facing. Disulfide bonds link cysteine 148/cysteine 162 and cysteine 212/cysteine 213. An N-linked (GlcNAc...) asparagine glycan is attached at asparagine 161. A run of 3 helical transmembrane segments spans residues 231-255 (PLYF…VFYL), 263-281 (MTLS…LVIV), and 297-316 (YMLF…VIVI). Residues 317–428 (NTHHRSPSTH…WKYVAMVMDH (112 aa)) lie on the Cytoplasmic side of the membrane. The chain crosses the membrane as a helical span at residues 429 to 447 (ILLGVFMLVCLIGTLAVFA).

This sequence belongs to the ligand-gated ion channel (TC 1.A.9) family. Acetylcholine receptor (TC 1.A.9.1) subfamily. Alpha-1/CHRNA1 sub-subfamily. As to quaternary structure, one of the alpha chains that assemble within the acetylcholine receptor, a pentamer of two alpha chains, a beta, a delta, and a gamma (in immature muscle) or epsilon (in mature muscle) chains. The muscle heteropentamer composed of alpha-1, beta-1, delta, epsilon subunits interacts with the alpha-conotoxin ImII.

Its subcellular location is the postsynaptic cell membrane. It localises to the cell membrane. The catalysed reaction is K(+)(in) = K(+)(out). The enzyme catalyses Na(+)(in) = Na(+)(out). Upon acetylcholine binding, the AChR responds by an extensive change in conformation that affects all subunits and leads to opening of an ion-conducting channel across the plasma membrane. The sequence is that of Acetylcholine receptor subunit alpha (Chrna1) from Mus musculus (Mouse).